The primary structure comprises 804 residues: Chondroitin sulfate synthase mig-22 (804 aa).

The Cytoplasmic portion of the chain corresponds to 1-6 (MVGGGR). Residues 7–27 (TGIHLLLGFLIGAALALFFFS) form a helical; Signal-anchor for type II membrane protein membrane-spanning segment. Residues 28-804 (STPSIDLTSS…QLAKLLFHEK (777 aa)) lie on the Lumenal side of the membrane. N-linked (GlcNAc...) asparagine glycans are attached at residues N123, N172, and N268.

The protein belongs to the chondroitin N-acetylgalactosaminyltransferase family. Interacts with sqv-5. Requires a divalent metal cation as cofactor. In terms of tissue distribution, expressed in seam cells, the vulval epithelium and in oocytes (at protein level).

It localises to the golgi apparatus. It is found in the golgi stack membrane. The enzyme catalyses 3-O-(beta-D-GlcA-(1-&gt;3)-beta-D-GalNAc-(1-&gt;4)-beta-D-GlcA-(1-&gt;3)-beta-D-Gal-(1-&gt;3)-beta-D-Gal-(1-&gt;4)-beta-D-Xyl)-L-seryl-[protein] + UDP-N-acetyl-alpha-D-galactosamine = 3-O-(beta-D-GalNAc-(1-&gt;4)-beta-D-GlcA-(1-&gt;3)-beta-D-GalNAc-(1-&gt;4)-beta-D-GlcA-(1-&gt;3)-beta-D-Gal-(1-&gt;3)-beta-D-Gal-(1-&gt;4)-beta-D-Xyl)-L-seryl-[protein] + UDP + H(+). It catalyses the reaction 3-O-{beta-D-GlcA-(1-&gt;3)-[beta-D-GalNAc-(1-&gt;4)-beta-D-GlcA-(1-&gt;3)](n)-beta-D-GalNAc-(1-&gt;4)-beta-D-GlcA-(1-&gt;3)-beta-D-Gal-(1-&gt;3)-beta-D-Gal-(1-&gt;4)-beta-D-Xyl}-L-seryl-[protein] + UDP-N-acetyl-alpha-D-galactosamine = 3-O-{[beta-D-GalNAc-(1-&gt;4)-beta-D-GlcA-(1-&gt;3)](n+1)-beta-D-GalNAc-(1-&gt;4)-beta-D-GlcA-(1-&gt;3)-beta-D-Gal-(1-&gt;3)-beta-D-Gal-(1-&gt;4)-beta-D-Xyl}-L-seryl-[protein] + UDP + H(+). The catalysed reaction is 3-O-(beta-D-GalNAc-(1-&gt;4)-beta-D-GlcA-(1-&gt;3)-beta-D-Gal-(1-&gt;3)-beta-D-Gal-(1-&gt;4)-beta-D-Xyl)-L-seryl-[protein] + UDP-alpha-D-glucuronate = 3-O-(beta-D-GlcA-(1-&gt;3)-beta-D-GalNAc-(1-&gt;4)-beta-D-GlcA-(1-&gt;3)-beta-D-Gal-(1-&gt;3)-beta-D-Gal-(1-&gt;4)-beta-D-Xyl)-L-seryl-[protein] + UDP + H(+). It carries out the reaction 3-O-{[beta-D-GalNAc-(1-&gt;4)-beta-D-GlcA-(1-&gt;3)](n)-beta-D-GalNAc-(1-&gt;4)-beta-D-GlcA-(1-&gt;3)-beta-D-Gal-(1-&gt;3)-beta-D-Gal-(1-&gt;4)-beta-D-Xyl}-L-seryl-[protein] + UDP-alpha-D-glucuronate = 3-O-{beta-D-GlcA-(1-&gt;3)-[beta-D-GalNAc-(1-&gt;4)-beta-D-GlcA-(1-&gt;3)](n)-beta-D-GalNAc-(1-&gt;4)-beta-D-GlcA-(1-&gt;3)-beta-D-Gal-(1-&gt;3)-beta-D-Gal-(1-&gt;4)-beta-D-Xyl}-L-seryl-[protein] + UDP + H(+). Its function is as follows. Has both beta-1,3-glucuronic acid and beta-1,4-N-acetylgalactosamine transferase activity. Transfers glucuronic acid (GlcUA) from UDP-GlcUA and N-acetylgalactosamine (GalNAc) from UDP-GalNAc to the non-reducing end of the elongating chondroitin polymer. Required together with sqv-5 for the biosynthesis of chondroitin. Chondroitin is involved in organogenesis of the vulva, maturation of the gonad, and neural development. May have a specific role in unc-6/netrin-mediated dorsal guidance of gonadal distal tip cells. Glycosyltransferase activity is weak. The polypeptide is Chondroitin sulfate synthase mig-22 (mig-22) (Caenorhabditis elegans).